The chain runs to 72 residues: Translation initiation factor IF-1 (72 aa).

An S1-like domain is found at 1–72 (MAKDDVIEID…DKGRITYRYK (72 aa)).

Belongs to the IF-1 family. Component of the 30S ribosomal translation pre-initiation complex which assembles on the 30S ribosome in the order IF-2 and IF-3, IF-1 and N-formylmethionyl-tRNA(fMet); mRNA recruitment can occur at any time during PIC assembly.

It is found in the cytoplasm. Functionally, one of the essential components for the initiation of protein synthesis. Stabilizes the binding of IF-2 and IF-3 on the 30S subunit to which N-formylmethionyl-tRNA(fMet) subsequently binds. Helps modulate mRNA selection, yielding the 30S pre-initiation complex (PIC). Upon addition of the 50S ribosomal subunit IF-1, IF-2 and IF-3 are released leaving the mature 70S translation initiation complex. This is Translation initiation factor IF-1 from Campylobacter curvus (strain 525.92).